The primary structure comprises 219 residues: Ribose-5-phosphate isomerase A (219 aa).

Substrate-binding positions include 28 to 31 (SGST), 81 to 84 (DGAD), and 94 to 97 (KGGG). E103 (proton acceptor) is an active-site residue. K121 provides a ligand contact to substrate.

Belongs to the ribose 5-phosphate isomerase family. Homodimer.

It catalyses the reaction aldehydo-D-ribose 5-phosphate = D-ribulose 5-phosphate. Its pathway is carbohydrate degradation; pentose phosphate pathway; D-ribose 5-phosphate from D-ribulose 5-phosphate (non-oxidative stage): step 1/1. In terms of biological role, catalyzes the reversible conversion of ribose-5-phosphate to ribulose 5-phosphate. The polypeptide is Ribose-5-phosphate isomerase A (Actinobacillus pleuropneumoniae serotype 5b (strain L20)).